Reading from the N-terminus, the 223-residue chain is Kinetochore protein Spc25 (223 aa).

Residues 65 to 115 are a coiled coil; that stretch reads LRCGELEKRANFMEELTQELEATKQRNLVMRDQIKQLNVLARQHRNEVMES.

The protein belongs to the SPC25 family. As to quaternary structure, component of the Ndc80 complex, which is composed of Ndc80, Nuf2 and Spc25.

It localises to the nucleus. Its subcellular location is the chromosome. It is found in the centromere. The protein resides in the kinetochore. Acts as a component of the essential kinetochore-associated Ndc80 complex, which is required for chromosome segregation and spindle checkpoint activity during meiosis and mitosis. Required for kinetochore integrity and the organization of stable microtubule binding sites in the outer plate of the kinetochore. Participates in SAC signaling that responds specifically to disruptions in spindle microtubule dynamics. The NDC80 complex synergistically enhances the affinity of the SKA1 complex for microtubules and may allow the NDC80 complex to track depolymerizing microtubules. This chain is Kinetochore protein Spc25, found in Drosophila lutescens (Fruit fly).